Here is a 385-residue protein sequence, read N- to C-terminus: tRNA-specific 2-thiouridylase MnmA (385 aa).

ATP contacts are provided by residues 18–25 and L44; that span reads AMSGGVDS. Residue C112 is the Nucleophile of the active site. A disulfide bond links C112 and C209. G136 contacts ATP. The segment at 159–161 is interaction with tRNA; sequence RDQ. Residue C209 is the Cysteine persulfide intermediate of the active site.

It belongs to the MnmA/TRMU family.

It is found in the cytoplasm. It carries out the reaction S-sulfanyl-L-cysteinyl-[protein] + uridine(34) in tRNA + AH2 + ATP = 2-thiouridine(34) in tRNA + L-cysteinyl-[protein] + A + AMP + diphosphate + H(+). In terms of biological role, catalyzes the 2-thiolation of uridine at the wobble position (U34) of tRNA, leading to the formation of s(2)U34. The sequence is that of tRNA-specific 2-thiouridylase MnmA from Methylorubrum populi (strain ATCC BAA-705 / NCIMB 13946 / BJ001) (Methylobacterium populi).